The primary structure comprises 86 residues: Putative regulatory protein Dvul_2085 (86 aa).

This sequence belongs to the RemA family.

This chain is Putative regulatory protein Dvul_2085, found in Nitratidesulfovibrio vulgaris (strain DP4) (Desulfovibrio vulgaris).